The following is a 204-amino-acid chain: Thymidine kinase (204 aa).

Residues 15–22 and 88–91 each bind ATP; these read GSMFSGKS and DEVQ. The active-site Proton acceptor is Glu89. Cys145, Cys148, Cys183, and Cys186 together coordinate Zn(2+).

It belongs to the thymidine kinase family. Homotetramer.

The protein localises to the cytoplasm. It catalyses the reaction thymidine + ATP = dTMP + ADP + H(+). The chain is Thymidine kinase from Halalkalibacterium halodurans (strain ATCC BAA-125 / DSM 18197 / FERM 7344 / JCM 9153 / C-125) (Bacillus halodurans).